A 706-amino-acid polypeptide reads, in one-letter code: mRNA (2'-O-methyladenosine-N(6)-)-methyltransferase (706 aa).

The interval Met1–Val34 is disordered. Over residues Leu16–Cys29 the composition is skewed to polar residues. A Phosphoserine modification is found at Ser30. Residues Glu43–Leu77 enclose the WW domain. Positions Gly88 to Pro148 are disordered. Residues Lys109–Arg113 carry the Nuclear localization signal motif. At Ser116 the chain carries Phosphoserine. Positions Ile132–Ile147 are enriched in low complexity. Thr152 carries the phosphothreonine modification. Residues Arg234 and Arg264 each coordinate substrate. Asn552–Phe555 contacts S-adenosyl-L-methionine. Substrate-binding positions include Glu557 and Trp587–Pro591. Phe613–His615 contacts S-adenosyl-L-methionine. The interval Thr663–Thr706 is disordered. Residues Gln668–Ser686 carry the Nuclear localization signal motif. Residues Ser675–Ser686 show a composition bias toward low complexity. Over residues Glu687–Thr706 the composition is skewed to basic and acidic residues.

The protein belongs to the CAPAM family. Interacts with POLR2A; interacts with the phosphorylated C-terminal domain (CTD) of POLR2A.

The protein resides in the nucleus. The catalysed reaction is a 5'-end (N(7)-methyl 5'-triphosphoguanosine)-(2'-O-methyladenosine) in mRNA + S-adenosyl-L-methionine = a 5'-end (N(7)-methyl 5'-triphosphoguanosine)-(N(6),2'-O-dimethyladenosine) in mRNA + S-adenosyl-L-homocysteine + H(+). With respect to regulation, cap-specific adenosine methyltransferase activity is inhibited by zinc. Functionally, cap-specific adenosine methyltransferase that catalyzes formation of N(6),2'-O-dimethyladenosine cap (m6A(m)) by methylating the adenosine at the second transcribed position of capped mRNAs. Recruited to the early elongation complex of RNA polymerase II (RNAPII) via interaction with POLR2A and mediates formation of m6A(m) co-transcriptionally. The polypeptide is mRNA (2'-O-methyladenosine-N(6)-)-methyltransferase (Mus musculus (Mouse)).